A 147-amino-acid chain; its full sequence is MSAFSMAPLFRQSIGFDRFNDLFESALRNEAGSTYPPYNIEKHGDERYRIVIAAAGFQESDLDVQVERGVLSVSGGKRENRSEGVTYLHQGIAQRAFKLSFRLVDHIEVKGAELRNGLLSIELVRIVPERPAPSAFRSAAAGRPLES.

The sHSP domain maps to 29 to 141 (NEAGSTYPPY…APSAFRSAAA (113 aa)).

It belongs to the small heat shock protein (HSP20) family.

This chain is 16 kDa heat shock protein B (ibpB), found in Azotobacter vinelandii.